A 431-amino-acid chain; its full sequence is L-lysine N6-monooxygenase MbtG (431 aa).

An N-terminal signal peptide occupies residues 1-21 (MNPTLAVLGAGAKAVAVAAKA).

The protein belongs to the lysine N(6)-hydroxylase/L-ornithine N(5)-oxygenase family. It depends on FAD as a cofactor.

The enzyme catalyses L-lysine + NADPH + O2 = N(6)-hydroxy-L-lysine + NADP(+) + H2O. Its pathway is siderophore biosynthesis; mycobactin biosynthesis. Flavoprotein monooxygenase required for N-hydroxylation of the two acylated lysine residues during mycobactin assembly, thus producing the hydroxamate groups necessary for iron sequestration. Is also able, but less efficiently, to hydroxylate L-lysine (non acylated) in vitro. The sequence is that of L-lysine N6-monooxygenase MbtG (mbtG) from Mycobacterium bovis (strain ATCC BAA-935 / AF2122/97).